Reading from the N-terminus, the 64-residue chain is Lectin-A (64 aa).

2 consecutive Chitin-binding type-1 domains span residues 1 to 20 (APEC…QVVT) and 22 to 45 (DFDD…NTDA).

Post-translationally, glycosylated.

Its function is as follows. N-acetyl-D-glucosamine binding lectin. Shows low hemagglutinating activity towards human erythrocytes. Has low mitogenic activity towards human peripheral blood lymphocytes. In Phytolacca americana (American pokeweed), this protein is Lectin-A.